A 693-amino-acid polypeptide reads, in one-letter code: Adhesion G-protein coupled receptor G1 (693 aa).

A signal peptide spans 1-25; sequence MTPQSLLQTTLFLLSLLFLVQGAHG. 26–33 contacts heparin; the sequence is RGHREDFR. Over 26 to 401 the chain is Extracellular; the sequence is RGHREDFRFC…SVEVDAVHKH (376 aa). 2 cysteine pairs are disulfide-bonded: Cys35–Cys91 and Cys121–Cys177. 3 N-linked (GlcNAc...) asparagine glycosylation sites follow: Asn39, Asn148, and Asn171. 190–200 is a binding site for heparin; sequence LKHPQKASRRP. The 172-residue stretch at 224–395 folds into the GAIN-B domain; it reads DMVSFEEDRI…AVLMVSSVEV (172 aa). 4 N-linked (GlcNAc...) asparagine glycosylation sites follow: Asn234, Asn303, Asn324, and Asn341. 2 cysteine pairs are disulfide-bonded: Cys346/Cys377 and Cys366/Cys379. The interval 346-395 is GPS; that stretch reads CVFWVEDPTLSSPGHWSSAGCETVRRETQTSCFCNHLTYFAVLMVSSVEV. The stachel stretch occupies residues 384–397; it reads YFAVLMVSSVEVDA. Residues 402–424 form a helical membrane-spanning segment; it reads YLSLLSYVGCVVSALACLVTIAA. Residues 425-437 lie on the Cytoplasmic side of the membrane; sequence YLCSRVPLPCRRK. The chain crosses the membrane as a helical span at residues 438–460; that stretch reads PRDYTIKVHMNLLLAVFLLDTSF. Residues 461–465 lie on the Extracellular side of the membrane; it reads LLSEP. Residues 466–495 traverse the membrane as a helical segment; it reads VALTGSEAGCRASAIFLHFSLLTCLSWMGL. Cys475 and Cys562 are oxidised to a cystine. The Cytoplasmic portion of the chain corresponds to 496-510; it reads EGYNLYRLVVEVFGT. Residues 511–533 traverse the membrane as a helical segment; sequence YVPGYLLKLSAMGWGFPIFLVTL. At 534-562 the chain is on the extracellular side; the sequence is VALVDVDNYGPIILAVHRTPEGVIYPSMC. The helical transmembrane segment at 563–588 threads the bilayer; that stretch reads WIRDSLVSYITNLGLFSLVFLFNMAM. At 589-602 the chain is on the cytoplasmic side; that stretch reads LATMVVQILRLRPH. The chain crosses the membrane as a helical span at residues 603–624; that stretch reads TQKWSHVLTLLGLSLVLGLPWA. The Extracellular portion of the chain corresponds to 625–628; the sequence is LIFF. A helical transmembrane segment spans residues 629–654; sequence SFASGTFQLVVLYLFSIITSFQGFLI. At 655–693 the chain is on the cytoplasmic side; that stretch reads FIWYWSMRLQARGGPSPLKSNSDSARLPISSGSTSSSRI. A disordered region spans residues 670–693; it reads SPLKSNSDSARLPISSGSTSSSRI. The span at 684 to 693 shows a compositional bias: low complexity; it reads SSGSTSSSRI.

The protein belongs to the G-protein coupled receptor 2 family. LN-TM7 subfamily. In terms of assembly, heterodimer of 2 chains generated by proteolytic processing; the large extracellular N-terminal fragment (ADGRG1 NT) and the membrane-bound C-terminal fragment (ADGRG1-CT) predominantly remain associated and non-covalently linked. ADGRG1 NT self-associates in a trans-trans manner; the homophilic interaction enhances receptor signaling. Interacts with TGM2. Interacts with heparin; leading to the reduction of ADGRG1 shedding. Interacts with COL3A1. Part of a GPCR-tetraspanin complex at least consisting of ADGRG1, CD81, eventually CD9, and GNA11 in which CD81 is enhancing the association of ADGRG1 with GNA11. Autoproteolytically cleaved into 2 fragments; the large extracellular N-terminal fragment (ADGRG1 NT) and the membrane-bound C-terminal fragment (ADGRG1 CT) predominantly remain associated and non-covalently linked. Shedding to yield the secreted ADGRG1 N-terminal fragment seems to involve metalloprotease(s). Post-translationally, N-glycosylated. Contains sialic acid residues. In terms of processing, ubiquitinated. Undergoes polyubiquitination upon activation. Widely distributed with highest levels found in thyroid gland, brain and heart. Expressed in a great number of tumor cells. Expression is down-regulated in different tumors from highly metastatic cells.

The protein localises to the cell membrane. It is found in the secreted. The protein resides in the membrane raft. Forms a heterodimer of 2 chains generated by proteolytic processing that remain associated through non-covalent interactions mediated by the GAIN-B domain. In the inactivated receptor, the Stachel sequence (also named stalk) is embedded in the GAIN-B domain, where it adopts a beta-strand conformation. On activation, the Stachel moves into the 7 transmembrane region and adopts a twisted hook-shaped configuration that forms contacts within the receptor, leading to coupling of a G-alpha protein, which activates signaling. The cleaved GAIN-B and N-terminal domains can then dissociate from the rest of the receptor. Its function is as follows. Adhesion G-protein coupled receptor (aGPCR) for steroid hormone 17alpha-hydroxypregnenolone (17-OH), which is involved in cell adhesion and cell-cell interactions. Ligand binding causes a conformation change that triggers signaling via guanine nucleotide-binding proteins (G proteins) and modulates the activity of downstream effectors, such as RhoA pathway. ADGRG1 is coupled to G(12) and/or G(13) G proteins (GNA12 and GNA13, respectively) and mediates the activation Rho small GTPases. Acts as a potent suppressor of ferroptosis: binding to 17-OH-binding initiates signaling that down-regulates CD36 and alleviates ferroptosis-induced liver injury. Ligand-binding also induces cell adhesion activity via association with proteins such as collagen III/COL3A1 and TGM2. Mediates cell matrix adhesion in developing neurons and hematopoietic stem cells. Involved in cortical development, specifically in maintenance of the pial basement membrane integrity and in cortical lamination: association with COL3A1 in the developing brain inhibits neuronal migration via activation of the RhoA pathway. Together with TGM2, acts as a regulator of myelination and myelin repair in oligodendrocyte precursor cells. Acts as a hemostatic sensor of shear force: G protein-coupled receptor signaling is activated in response to shear force in platelets, promoting G(13) G protein signaling, and platelet shape change and aggregation in a COL3A1-dependent manner. Acts as an inhibitor of VEGFA production thereby inhibiting angiogenesis through a signaling pathway mediated by PRKCA. Plays a role in the maintenance of hematopoietic stem cells in bone marrow niche. Plays an essential role in testis development. The sequence is that of Adhesion G-protein coupled receptor G1 from Homo sapiens (Human).